An 881-amino-acid polypeptide reads, in one-letter code: Band 4.1-like protein 1 (881 aa).

Residue methionine 1 is modified to N-acetylmethionine. Residues 1-88 (MTTETGPDSE…TPSKAQKSPQ (88 aa)) are disordered. Positions 17–35 (EAPQQPEAAAAVTTPVTPA) are enriched in low complexity. Threonine 30 is subject to Phosphothreonine. A compositionally biased stretch (basic and acidic residues) spans 38 to 50 (GHPEANSNEKHPS). Serine 75 is subject to Phosphoserine. A compositionally biased stretch (polar residues) spans 76 to 87 (ERTTPSKAQKSP). Residue threonine 79 is modified to Phosphothreonine. The FERM domain occupies 97-378 (AICRVTLLDA…EHHTFFRLVS (282 aa)). Tyrosine 343 is modified (phosphotyrosine). Phosphoserine is present on residues serine 378, serine 430, and serine 437. The disordered stretch occupies residues 428-501 (SRSLDGAEFS…HKQEFLDKPE (74 aa)). The span at 444 to 457 (ENHDAGPDGDKRDE) shows a compositional bias: basic and acidic residues. 2 positions are modified to phosphoserine: serine 461 and serine 466. Residues 466-501 (SEAEEGEVRTPTKIKELKPEQETTPRHKQEFLDKPE) show a composition bias toward basic and acidic residues. Threonine 475 carries the phosphothreonine modification. Residues 483–541 (KPEQETTPRHKQEFLDKPEDVLLKHQASINELKRTLKEPNSKLIHRDRDWERERRLPSS) are spectrin--actin-binding. Serine 510 is modified (phosphoserine). Over residues 514-538 (LKRTLKEPNSKLIHRDRDWERERRL) the composition is skewed to basic and acidic residues. The disordered stretch occupies residues 514–596 (LKRTLKEPNS…QERDTVFLKD (83 aa)). Residues serine 540, serine 541, serine 544, and serine 546 each carry the phosphoserine modification. Position 550 is a phosphothreonine (threonine 550). Basic and acidic residues predominate over residues 550–577 (TPEKANERAGLREGSEEKVKPPRPRAPE). Phosphoserine is present on residues serine 564 and serine 578. Threonine 580 bears the Phosphothreonine mark. Phosphoserine occurs at positions 639, 648, 650, 667, 672, 678, and 685. The interval 642–699 (ELDRDKSDSDTEGLLFSRDLNKGAPSQDDESGGIEDSPDRGACSTPDMPQFEPVKTET) is disordered. Threonine 686 is modified (phosphothreonine). Residues serine 722, serine 784, and serine 870 each carry the phosphoserine modification. Positions 746 to 881 (SITTETISTT…EERDKKPQES (136 aa)) are C-terminal (CTD).

In terms of assembly, interacts with AGAP2. As to expression, highest expression in brain, lower in heart, kidney, pancreas, placenta, lung and skeletal muscle.

The protein resides in the cytoplasm. The protein localises to the cytoskeleton. In terms of biological role, may function to confer stability and plasticity to neuronal membrane via multiple interactions, including the spectrin-actin-based cytoskeleton, integral membrane channels and membrane-associated guanylate kinases. The chain is Band 4.1-like protein 1 from Homo sapiens (Human).